The primary structure comprises 572 residues: Proline--tRNA ligase (572 aa).

This sequence belongs to the class-II aminoacyl-tRNA synthetase family. ProS type 1 subfamily. As to quaternary structure, homodimer.

The protein resides in the cytoplasm. The enzyme catalyses tRNA(Pro) + L-proline + ATP = L-prolyl-tRNA(Pro) + AMP + diphosphate. Its function is as follows. Catalyzes the attachment of proline to tRNA(Pro) in a two-step reaction: proline is first activated by ATP to form Pro-AMP and then transferred to the acceptor end of tRNA(Pro). As ProRS can inadvertently accommodate and process non-cognate amino acids such as alanine and cysteine, to avoid such errors it has two additional distinct editing activities against alanine. One activity is designated as 'pretransfer' editing and involves the tRNA(Pro)-independent hydrolysis of activated Ala-AMP. The other activity is designated 'posttransfer' editing and involves deacylation of mischarged Ala-tRNA(Pro). The misacylated Cys-tRNA(Pro) is not edited by ProRS. The polypeptide is Proline--tRNA ligase (Caldicellulosiruptor bescii (strain ATCC BAA-1888 / DSM 6725 / KCTC 15123 / Z-1320) (Anaerocellum thermophilum)).